The sequence spans 219 residues: Dephospho-CoA kinase (219 aa).

Residues 8-215 (LVGVTGGIGS…EAAASGPDCQ (208 aa)) form the DPCK domain. Position 16–21 (16–21 (GSGKST)) interacts with ATP.

Belongs to the CoaE family.

It is found in the cytoplasm. The enzyme catalyses 3'-dephospho-CoA + ATP = ADP + CoA + H(+). It functions in the pathway cofactor biosynthesis; coenzyme A biosynthesis; CoA from (R)-pantothenate: step 5/5. Functionally, catalyzes the phosphorylation of the 3'-hydroxyl group of dephosphocoenzyme A to form coenzyme A. In Chlorobium luteolum (strain DSM 273 / BCRC 81028 / 2530) (Pelodictyon luteolum), this protein is Dephospho-CoA kinase.